The chain runs to 544 residues: MPKAKAKTKNTEIISPHHYVYPNTTTLKNKYGIKNLNAFLEKCSHDTAKAMINLREESLPEYFDTAYLCHIHQQLFKNTFEWAGYLRHIPFTFADGTTAAMPEMKRTGWKNAFAIGDEIQEGLQRLDQTLAEKNNLQGLTREEFNSEAIELFNSLNQLHPFREGNGRTQRLFFENLAKAAGHQLNFSLITKERMMVASVAVAENGDLEPMQHLFEDISNPEKIRLLKEFMHTMKNTGRNVNDRPVMVAKEGETYTGTYRGAGLEGFALNVKGAYIIGNIDHLPPEQLKILKPGDKITFTAPKAEELKKTLIPKETLVPLTKLEIAEMVAEDAFVHTCRDQICSLSKIVYGSQGVLNKNIIEIIKNPSKGQQLATQIERTPYSVHSLAGFDLICFKTGARVRAEKHVALLSCAVANFTHAVKHARQEITKEHQAEQNRLRQEVPMPSQSLQDLLSLPKEFQQKALGVSPLLQKELTSLLQKVNSRLSSSEQRALRENNHETLAKNLGVSEQKAKEITKTVMKAREVQQKSQTRTVSHSKTLAMAS.

Residues 63-216 (FDTAYLCHIH…LEPMQHLFED (154 aa)) form the Fido domain. Residues 93-94 (FA), 106-107 (RT), 163-167 (EGNGR), and Arg-170 contribute to the ATP site.

Its subcellular location is the secreted. The enzyme catalyses L-tyrosyl-[protein] + ATP = O-(5'-adenylyl)-L-tyrosyl-[protein] + diphosphate. It carries out the reaction L-threonyl-[protein] + ATP = 3-O-(5'-adenylyl)-L-threonyl-[protein] + diphosphate. In terms of biological role, adenylyltransferase involved in virulence by mediating the addition of adenosine 5'-monophosphate (AMP) to specific residue of host target proteins. The polypeptide is Protein adenylyltransferase (bepA) (Bartonella henselae (strain ATCC 49882 / DSM 28221 / CCUG 30454 / Houston 1) (Rochalimaea henselae)).